The primary structure comprises 1075 residues: Protein nervous wreck (1075 aa).

Residues 11–289 (VKFLKNLHTE…QAQQLTREYN (279 aa)) form the F-BAR domain. Disordered regions lie at residues 361 to 381 (LRDSGQRTDPNDPNGPDLDTK) and 431 to 536 (SASS…DEPI). The span at 431–453 (SASSISMRTDASGQGENPSSDSF) shows a compositional bias: polar residues. A compositionally biased stretch (basic and acidic residues) spans 469–482 (PKQEQQLSRDRTFS). Positions 493-512 (SAAAASSAAAASSSMMASSA) are enriched in low complexity. SH3 domains are found at residues 542–603 (EAIF…IDQE) and 658–721 (SDVE…ECDE). Disordered stretches follow at residues 722-747 (MGEPLSEGGDESPPPTAAPTFALPPA), 769-837 (SQDT…EKGA), and 864-917 (GADK…EGNA). Pro residues-rich tracts occupy residues 733 to 747 (SPPPTAAPTFALPPA) and 809 to 818 (QPPPSLPPPQ). Residues 819-837 (LAKAGGSAPGSGSKVEKGA) are compositionally biased toward low complexity. Residues 883 to 897 (VSKEQPAEVAKKPDI) show a composition bias toward basic and acidic residues.

In terms of assembly, homodimer. Interacts (via SH3 domain 1) with WASp. Interacts (via SH3 domain 1) with shi/dynamin. Interacts (via SH3 domain 2) with Dap160. Interacts (via F-BAR domain) with SH3PX1. Interacts (via SH3 domain 2) with Snx16. Identified in a complex with Syn and Syt1. In terms of tissue distribution, detected in larval body wall muscle. Detected at the neuromuscular junction, on motoneuron axons and axon terminals, at synaptic boutons in the periactive zone surrounding the synapse (at protein level). Detected on motoneuron axons and axon terminals, at synaptic boutons in the periactive zone surrounding the synapse.

The protein localises to the endomembrane system. The protein resides in the synapse. It is found in the cell projection. Its subcellular location is the axon. It localises to the presynaptic cell membrane. The protein localises to the cytoplasmic vesicle. The protein resides in the secretory vesicle. It is found in the synaptic vesicle. Its subcellular location is the recycling endosome. Adapter protein that provides a link between vesicular membrane traffic and the actin assembly machinery. Acts together with Cdc42 to stimulate actin nucleation mediated by WASp and the ARP2/3 complex. Binds to membranes enriched in phosphatidylinositol 4,5-bisphosphate and causes local membrane deformation. Required for normal structure and function of synapses at the neuromuscular junction. Plays a role in synaptic vesicle trafficking. Required for the release of a normal number of synaptic vesicles per action potential. This is Protein nervous wreck from Drosophila melanogaster (Fruit fly).